The following is a 319-amino-acid chain: 2-dehydropantoate 2-reductase (319 aa).

NADP(+) is bound by residues 10–15 (GTGALG) and Asn105. A substrate-binding site is contributed by Asn105. The Proton donor role is filled by Lys192. Residues Asn196, Asn200, and Ser262 each coordinate substrate. Glu274 contacts NADP(+).

It belongs to the ketopantoate reductase family.

The protein resides in the cytoplasm. It catalyses the reaction (R)-pantoate + NADP(+) = 2-dehydropantoate + NADPH + H(+). It participates in cofactor biosynthesis; (R)-pantothenate biosynthesis; (R)-pantoate from 3-methyl-2-oxobutanoate: step 2/2. Functionally, catalyzes the NADPH-dependent reduction of ketopantoate into pantoic acid. The protein is 2-dehydropantoate 2-reductase of Nostoc sp. (strain PCC 7120 / SAG 25.82 / UTEX 2576).